A 139-amino-acid chain; its full sequence is MLIAIGIMFQPLQYPTIPCIIFMVIVGLGLLFAFQFILGYGFEMHRQITIKDRIAFRNYVVGKIFNVLVEHSYYGLLLSTFNLFVYKKAITIRLCFIFAISIVIFWILGGKLIKKSLKLCFSWFYFFINPSISHKCNSK.

The next 3 membrane-spanning stretches (helical) occupy residues 19–39 (CIIF…FILG), 64–84 (IFNV…FNLF), and 89–109 (AITI…WILG).

The protein localises to the cell membrane. This is an uncharacterized protein from Methanocaldococcus jannaschii (strain ATCC 43067 / DSM 2661 / JAL-1 / JCM 10045 / NBRC 100440) (Methanococcus jannaschii).